Consider the following 556-residue polypeptide: 5-aminolevulinate synthase, mitochondrial (556 aa).

The N-terminal 46 residues, 1–46 (MDSLARQSAKICPFVSRVTSSMQQVQVLHKTNMSAMAQQCPVMRRA), are a transit peptide targeting the mitochondrion. Substrate-binding residues include arginine 105, serine 218, and lysine 237. Pyridoxal 5'-phosphate is bound by residues serine 270, histidine 298, and threonine 342. Lysine 345 is an active-site residue. Residue lysine 345 is modified to N6-(pyridoxal phosphate)lysine. Pyridoxal 5'-phosphate-binding residues include threonine 374 and serine 375. Threonine 460 lines the substrate pocket.

Belongs to the class-II pyridoxal-phosphate-dependent aminotransferase family. As to quaternary structure, homodimer. Pyridoxal 5'-phosphate is required as a cofactor.

The protein localises to the mitochondrion matrix. The catalysed reaction is succinyl-CoA + glycine + H(+) = 5-aminolevulinate + CO2 + CoA. Its pathway is porphyrin-containing compound metabolism; protoporphyrin-IX biosynthesis; 5-aminolevulinate from glycine: step 1/1. Catalyzes the synthesis of 5-aminolevulinate (ALA) from succinyl-CoA and glycine, the first and rate-limiting step in heme biosynthesis. This is 5-aminolevulinate synthase, mitochondrial (HEM1) from Eremothecium gossypii (strain ATCC 10895 / CBS 109.51 / FGSC 9923 / NRRL Y-1056) (Yeast).